The chain runs to 335 residues: Phosphatidylcholine:ceramide cholinephosphotransferase 2 (335 aa).

5 helical membrane passes run leucine 60–isoleucine 80, tryptophan 104–leucine 124, phenylalanine 136–proline 156, isoleucine 200–valine 220, and leucine 229–valine 249. Histidine 210 is an active-site residue. Catalysis depends on residues histidine 253 and aspartate 257. The chain crosses the membrane as a helical span at residues valine 258 to methionine 278. Over arginine 279–glutamine 335 the chain is Cytoplasmic.

This sequence belongs to the sphingomyelin synthase family.

The protein resides in the membrane. The enzyme catalyses an N-acylsphing-4-enine + a 1,2-diacyl-sn-glycero-3-phosphocholine = a sphingomyelin + a 1,2-diacyl-sn-glycerol. It carries out the reaction an N-acyl-15-methylhexadecasphing-4-enine + a 1,2-diacyl-sn-glycero-3-phosphocholine = an N-acyl-15-methylhexadecasphing-4-enine-1-phosphocholine + a 1,2-diacyl-sn-glycerol. It participates in lipid metabolism; sphingolipid metabolism. Its function is as follows. Sphingomyelin synthases (SM synthase or SMS) synthesize the sphingolipid sphingomyelin (SM) through transfer of the phosphatidyl head group of 1,2-diacyl-sn-glycero-3-phosphocholine (phosphatidylcholine, PC) on to the primary hydroxyl of ceramide (N-acylsphingoid base), yielding 1,2-diacyl-sn-glycerol (diacylglycerol, DAG) as a side product. Functions as a bidirectional lipid cholinephosphotransferases capable of converting PC and ceramide to SM and DAG and vice versa depending on the respective levels of ceramide and DAG as phosphocholine acceptors, respectively. This Caenorhabditis elegans protein is Phosphatidylcholine:ceramide cholinephosphotransferase 2 (sms-2).